The following is a 218-amino-acid chain: Large ribosomal subunit protein uL3 (218 aa).

Residues 133–158 (RGQGASHGAQAVHRRPGSIGGCATPG) are disordered.

It belongs to the universal ribosomal protein uL3 family. In terms of assembly, part of the 50S ribosomal subunit. Forms a cluster with proteins L14 and L19.

One of the primary rRNA binding proteins, it binds directly near the 3'-end of the 23S rRNA, where it nucleates assembly of the 50S subunit. This Mycolicibacterium vanbaalenii (strain DSM 7251 / JCM 13017 / BCRC 16820 / KCTC 9966 / NRRL B-24157 / PYR-1) (Mycobacterium vanbaalenii) protein is Large ribosomal subunit protein uL3.